The following is a 168-amino-acid chain: MLTKGSKVVNVGIADMQGAQSPEILRTTLGSCIGVVFYAPDKKIGAMAHFMLSKDPSGKDSQKNPFKYAETAIPLLIKKMNEMGCNPGEYSVRLFGGASMFKGVQSSFLQNIGEQNILTARAILEQSKIPLILEDVGGNDGRTISLYLDDGRVLLKKGGFEKYLYKVR.

This sequence belongs to the CheD family.

The catalysed reaction is L-glutaminyl-[protein] + H2O = L-glutamyl-[protein] + NH4(+). In terms of biological role, probably deamidates glutamine residues to glutamate on methyl-accepting chemotaxis receptors (MCPs), playing an important role in chemotaxis. The polypeptide is Probable chemoreceptor glutamine deamidase CheD 2 (Leptospira interrogans serogroup Icterohaemorrhagiae serovar copenhageni (strain Fiocruz L1-130)).